Consider the following 356-residue polypeptide: Neutral protease 2 homolog MEP5 (356 aa).

Residues 1–19 (MRVSSSLIALAALAVQALA) form the signal peptide. Residues 20–179 (LPVNELAERD…ASAIPELDKR (160 aa)) constitute a propeptide that is removed on maturation. 2 disulfides stabilise this stretch: C187–C259 and C266–C284. A Zn(2+)-binding site is contributed by H308. E309 is a catalytic residue. Zn(2+)-binding residues include H312 and D323.

It belongs to the peptidase M35 family. Zn(2+) is required as a cofactor.

The protein localises to the secreted. It carries out the reaction Preferential cleavage of bonds with hydrophobic residues in P1'. Also 3-Asn-|-Gln-4 and 8-Gly-|-Ser-9 bonds in insulin B chain.. Its function is as follows. Secreted metalloproteinase that allows assimilation of proteinaceous substrates. Shows high activities on basic nuclear substrates such as histone and protamine. May be involved in virulence. This chain is Neutral protease 2 homolog MEP5 (MEP5), found in Coccidioides posadasii (strain C735) (Valley fever fungus).